A 254-amino-acid polypeptide reads, in one-letter code: 23S rRNA (guanosine-2'-O-)-methyltransferase RlmB (254 aa).

Positions 198, 218, and 227 each coordinate S-adenosyl-L-methionine.

Belongs to the class IV-like SAM-binding methyltransferase superfamily. RNA methyltransferase TrmH family. RlmB subfamily. In terms of assembly, homodimer.

It localises to the cytoplasm. It carries out the reaction guanosine(2251) in 23S rRNA + S-adenosyl-L-methionine = 2'-O-methylguanosine(2251) in 23S rRNA + S-adenosyl-L-homocysteine + H(+). In terms of biological role, specifically methylates the ribose of guanosine 2251 in 23S rRNA. In Blochmanniella floridana, this protein is 23S rRNA (guanosine-2'-O-)-methyltransferase RlmB.